Here is a 616-residue protein sequence, read N- to C-terminus: Matrix metalloproteinase-21 (616 aa).

The first 22 residues, 1-22, serve as a signal peptide directing secretion; sequence MPTAPALGALLLLLGALTPGHQ. The propeptide occupies 23 to 192; sequence EKLFHSRDHS…TSTSKIRKKR (170 aa). The Cysteine switch signature appears at 139–146; that stretch reads PRCGVPDN. Cys-141 is a Zn(2+) binding site. The tract at residues 157-186 is disordered; sequence SNSNNVTEKASGKSLNTTTNQNPENGTSTS. N-linked (GlcNAc...) asparagine glycosylation is found at Asn-161, Asn-172, and Asn-181. Zn(2+) is bound at residue His-329. Residue Glu-330 is part of the active site. 2 residues coordinate Zn(2+): His-333 and His-339. Cys-375 and Cys-606 form a disulfide bridge. Hemopexin repeat units lie at residues 376-435, 437-493, 494-542, and 549-605; these read EGSF…WHGI, AEGI…FPKI, PSPI…FPAV, and FGNI…WTDI. Asn-418 is a glycosylation site (N-linked (GlcNAc...) asparagine). Asn-597 carries N-linked (GlcNAc...) asparagine glycosylation.

It belongs to the peptidase M10A family. Requires Zn(2+) as cofactor. It depends on Ca(2+) as a cofactor. Post-translationally, the precursor is cleaved by a furin endopeptidase.

It is found in the secreted. May play a role in gastrulation-related cell movement. Plays a specialized role in the generation of left-right asymmetry during embryogenesis. May act as a negative regulator of the NOTCH-signaling pathway. The protein is Matrix metalloproteinase-21 (MMP21) of Cynops pyrrhogaster (Japanese fire-bellied newt).